A 231-amino-acid polypeptide reads, in one-letter code: RNA pyrophosphohydrolase (231 aa).

The Nudix hydrolase domain occupies 6–149 (GFRPNVGIIL…KRDVYQLALT (144 aa)). Positions 38-59 (GGIKYGETPEQAMYRELHEEIG) match the Nudix box motif. The tract at residues 168-200 (VHHGRHGSGQRYAQQPGQPPTLAQRRPLQPVTQ) is disordered.

This sequence belongs to the Nudix hydrolase family. RppH subfamily. It depends on a divalent metal cation as a cofactor.

Its function is as follows. Accelerates the degradation of transcripts by removing pyrophosphate from the 5'-end of triphosphorylated RNA, leading to a more labile monophosphorylated state that can stimulate subsequent ribonuclease cleavage. The chain is RNA pyrophosphohydrolase from Cupriavidus pinatubonensis (strain JMP 134 / LMG 1197) (Cupriavidus necator (strain JMP 134)).